The sequence spans 78 residues: DNA-directed RNA polymerase subunit omega (78 aa).

Belongs to the RNA polymerase subunit omega family. In terms of assembly, in cyanobacteria the RNAP catalytic core is composed of 2 alpha, 1 beta, 1 beta', 1 gamma and 1 omega subunit. When a sigma factor is associated with the core the holoenzyme is formed, which can initiate transcription.

The enzyme catalyses RNA(n) + a ribonucleoside 5'-triphosphate = RNA(n+1) + diphosphate. Promotes RNA polymerase assembly. Latches the N- and C-terminal regions of the beta' subunit thereby facilitating its interaction with the beta and alpha subunits. The chain is DNA-directed RNA polymerase subunit omega from Nostoc punctiforme (strain ATCC 29133 / PCC 73102).